The sequence spans 512 residues: Cytochrome P450 monooxygenase cheE (512 aa).

A helical transmembrane segment spans residues tyrosine 5–alanine 27. N-linked (GlcNAc...) asparagine glycans are attached at residues asparagine 53, asparagine 124, and asparagine 168. Cysteine 455 contributes to the heme binding site. 2 N-linked (GlcNAc...) asparagine glycosylation sites follow: asparagine 499 and asparagine 508.

It belongs to the cytochrome P450 family. Heme is required as a cofactor.

The protein localises to the membrane. It participates in secondary metabolite biosynthesis. Its function is as follows. Cytochrome P450 monooxygenase; part of the gene cluster that mediates the biosynthesis of chaetoglobosin A which has a unique inhibitory activity against actin polymerization in mammalian cells. Chaetoglobosin A and its intermediates are involved in the morphological differentiation of C.globosum. The first step of the pathway is the synthesis of prochaetoglobosin I via condensation of one acetyl-CoA, 8 malonyl-CoA, and a L-tryptophan molecule by the PKS-NRPS hybrid synthetase cheA, followed by reduction of backbone double bond to install desired geometry by the enoyl reductase cheB. Further multiple oxidation steps performed by the cytochrome P450 monooxygenases cheE and cheG, as well as by the FAD-linked oxidoreductase cheF, lead to the formation of chaetoglobosin A. Depending on the order of action of these reductases, distinct intermediates can be identified. Within the pathway, the cytochrome P450 monooxygenase cheE catalyzes a stereospecific epoxidation on prochaetoglobosin I, cytoglobosin D, and chaetoglobosin J intermediates. The FAD-linked oxidoreductase cheF performs dehydrogenation of the C-20 hydroxyl groups in the 20-dihyrochaetoglobosin A and cytoglobosin D intermediates. Finally, the cytochrome P450 monooxygenase cheG can catalyze the stereospecific dihydroxylation of prochaetoglobosin I and prochaetoglobosin IV at C-19 and C-20, respectively. The Diels-Alderase cheD may play a role in the post-PKS-NRPS biosynthetic steps catalyzing Diels-Alder cyclization. The protein is Cytochrome P450 monooxygenase cheE of Chaetomium globosum (strain ATCC 6205 / CBS 148.51 / DSM 1962 / NBRC 6347 / NRRL 1970) (Soil fungus).